Here is a 485-residue protein sequence, read N- to C-terminus: MSTVADTMQTLSNDIQLTFEELIKLLLRKTLKPILNPLGNNNIVYNSIKGKYERGLVNSANNDNINRYTYTMTKESLGWTDEILAHFRINAKFIKSSVPQRFPSNTKYHNMMKPNAKISFSDKETKNIINQCGENAICQYKNLLSMLNTRNVTGILANKKATFNYSSDIPYTYTFKELEDIGKDIIDQTDPSIPGCDSARMSTAMLRVRLYNLEQNLAKLSVDKPDIFDAYIDMLRIINGVPRKKIVWVIKLIALLTYQRWEDLDKQKHQKYYEILGDDFVNSFNSNELITILLQSNSSEYIIKASLLFPLLKMLFIVFGYSKLVPVISDINAEAQAAEHERLRKFYDKYKGATIRRQSDDQNKFYETECAENNFNADHAIKQIYGKADPEPIDQCVYDFIRLFGDLYPTLIGLMGGTEKFPPESIEINCNEIPHSYEDLTIIPEFLWRFNDFSYCRYLEYICSKQLHNVLNYKVNEKTRYLQSI.

The protein localises to the virion. This is an uncharacterized protein from Acanthamoeba polyphaga mimivirus (APMV).